The primary structure comprises 20 residues: Apidaecin 1+ (20 aa).

The disordered stretch occupies residues 1–20; sequence GKPNRPRPAPIQPRPPHPRL.

This sequence belongs to the apidaecin family.

It localises to the secreted. Antimicrobial peptide active against many Gram-negative enterobacterial and plant-associated bacterial species. Not active against other bacterial species like H.pylori, P.mirabilis, B.pertussis or N.gonorrhoeae. In terms of biological role, among others, also active against C.jejuni and L.pneumophila but not against Y.enterocolitica. Functionally, among others, also active against Y.enterocolitica butnot against L.pneumophila and C.jejuni. In Pimpla disparis (Parasitic wasp), this protein is Apidaecin 1+.